We begin with the raw amino-acid sequence, 176 residues long: Zinc finger A20 and AN1 domain-containing stress-associated protein 9 (176 aa).

The A20-type zinc-finger motif lies at 16–50; sequence ASEPKLCVKGCGFFGSPSNMDLCSKCYRGICAEEA. Positions 22, 26, 38, 41, 117, 120, 131, 133, 138, 141, 147, and 149 each coordinate Zn(2+). Residues 111 to 157 form an AN1-type zinc finger; sequence PARTNRCLCCNKKVGIMGFKCKCGSTFCGEHRYPETHDCSFDFKEVG.

Functionally, may be involved in environmental stress response. The sequence is that of Zinc finger A20 and AN1 domain-containing stress-associated protein 9 (SAP9) from Arabidopsis thaliana (Mouse-ear cress).